Reading from the N-terminus, the 181-residue chain is Adenylate kinase (181 aa).

An ATP-binding site is contributed by 10–15 (GAGKGT). The tract at residues 30–59 (STGELFRRNIEEGTKLGVEAKRYLDAGDLV) is NMP. AMP is bound by residues T31, R36, 57–59 (DLV), 85–88 (GYPR), and Q92. The tract at residues 126-132 (GRGRADD) is LID. R127 is a binding site for ATP. Residues R129 and R140 each coordinate AMP. G166 is an ATP binding site.

It belongs to the adenylate kinase family. In terms of assembly, monomer.

It is found in the cytoplasm. It carries out the reaction AMP + ATP = 2 ADP. It participates in purine metabolism; AMP biosynthesis via salvage pathway; AMP from ADP: step 1/1. Catalyzes the reversible transfer of the terminal phosphate group between ATP and AMP. Plays an important role in cellular energy homeostasis and in adenine nucleotide metabolism. This Mycobacterium tuberculosis (strain ATCC 25177 / H37Ra) protein is Adenylate kinase.